The chain runs to 636 residues: Autophagy-related protein 20 (636 aa).

Disordered stretches follow at residues 1 to 68 (MQIN…QPHE) and 84 to 163 (NYMQ…EGKK). Over residues 10–23 (NSVTHLENNSPSRL) the composition is skewed to polar residues. The span at 27-49 (KTVEEHKEHEPDLQTQSEMRRES) shows a compositional bias: basic and acidic residues. Positions 50–64 (NGSPKDTAVTNQNGD) are enriched in polar residues. Positions 122–133 (NRRKNSKERRRS) are enriched in basic residues. The 146-residue stretch at 160-305 (EGKKRAQILE…DFLDPNNKNW (146 aa)) folds into the PX domain. A 1,2-diacyl-sn-glycero-3-phospho-(1D-myo-inositol-3-phosphate) contacts are provided by Arg196, Ser198, Lys222, and Arg271.

This sequence belongs to the sorting nexin family.

It is found in the endosome membrane. The protein resides in the preautophagosomal structure membrane. In terms of biological role, required for cytoplasm to vacuole transport (Cvt), pexophagy and mitophagy. Also involved in endoplasmic reticulum-specific autophagic process and is essential for the survival of cells subjected to severe ER stress. Functions in protein retrieval from the endocytic pathway. This is Autophagy-related protein 20 (ATG20) from Kluyveromyces lactis (strain ATCC 8585 / CBS 2359 / DSM 70799 / NBRC 1267 / NRRL Y-1140 / WM37) (Yeast).